Consider the following 340-residue polypeptide: Guanine nucleotide-binding protein subunit beta-4 (340 aa).

Residue Ser-2 is modified to N-acetylserine. Phosphoserine is present on Ser-2. WD repeat units follow at residues 53–92 (GHLA…KMHA), 95–134 (LRSS…GNVR), 141–179 (GHTG…QTTT), 182–221 (GHSG…CRQS), and 224–263 (GHIS…ELLL). A Phosphohistidine modification is found at His-266. WD repeat units follow at residues 268-307 (NIIC…RAGV) and 310-339 (GHDN…LRIW).

Belongs to the WD repeat G protein beta family. As to quaternary structure, g proteins are composed of 3 units, alpha, beta and gamma. In terms of tissue distribution, widely expressed in the brain. Highest levels found in the hippocampus and layers v and vi of the neocortex.

Its function is as follows. Guanine nucleotide-binding proteins (G proteins) are involved as a modulator or transducer in various transmembrane signaling systems. The beta and gamma chains are required for the GTPase activity, for replacement of GDP by GTP, and for G protein-effector interaction. The chain is Guanine nucleotide-binding protein subunit beta-4 (Gnb4) from Rattus norvegicus (Rat).